Reading from the N-terminus, the 89-residue chain is Otospiralin (89 aa).

Residues 1–21 form the signal peptide; that stretch reads MQPCVLWWLALGLLLGIPAGA.

This sequence belongs to the otospiralin family. In terms of tissue distribution, ear specific. Expressed in the cochlea and vestibule, but not in the cochlear nerve, cochlear nucleus, spinal chord, muscle, cerebral cortex, cerebellum, diencephalon and olfactory bulb. In the cochlea, expressed in fibrocytes of the spiral limbus, spiral ligament and suprastrial zone. In the vestibule, expressed in cells located to the stroma below the macular and crista sensory epithelia and in the subepithelial layer of the walls of semicircular canals and maculae.

The protein resides in the secreted. In terms of biological role, may be essential for the survival of the neurosensory epithelium of the inner ear. This Rattus norvegicus (Rat) protein is Otospiralin (Otos).